We begin with the raw amino-acid sequence, 31 residues long: Cuticle protein 54 (31 aa).

A run of 2 repeats spans residues Ala-7 to Ala-10 and Ala-13 to Ile-17.

Functionally, component of the cuticle of migratory locust which contains more than 100 different structural proteins. In Locusta migratoria (Migratory locust), this protein is Cuticle protein 54.